The primary structure comprises 238 residues: Orotidine 5'-phosphate decarboxylase (238 aa).

Substrate-binding positions include D10, K32, 59-68, T122, R184, Q193, G213, and R214; that span reads DLKLHDIPNT. The active-site Proton donor is K61.

This sequence belongs to the OMP decarboxylase family. Type 1 subfamily. In terms of assembly, homodimer.

It catalyses the reaction orotidine 5'-phosphate + H(+) = UMP + CO2. Its pathway is pyrimidine metabolism; UMP biosynthesis via de novo pathway; UMP from orotate: step 2/2. Functionally, catalyzes the decarboxylation of orotidine 5'-monophosphate (OMP) to uridine 5'-monophosphate (UMP). The chain is Orotidine 5'-phosphate decarboxylase from Bacillus cereus (strain B4264).